A 544-amino-acid polypeptide reads, in one-letter code: Chaperonin GroEL 2 (544 aa).

Residues 29 to 32 (TLGP), 86 to 90 (DGTTT), Gly-413, 482 to 484 (NVL), and Asp-498 each bind ATP.

This sequence belongs to the chaperonin (HSP60) family. Forms a cylinder of 14 subunits composed of two heptameric rings stacked back-to-back. Interacts with the co-chaperonin GroES.

Its subcellular location is the cytoplasm. It carries out the reaction ATP + H2O + a folded polypeptide = ADP + phosphate + an unfolded polypeptide.. Together with its co-chaperonin GroES, plays an essential role in assisting protein folding. The GroEL-GroES system forms a nano-cage that allows encapsulation of the non-native substrate proteins and provides a physical environment optimized to promote and accelerate protein folding. This Roseiflexus sp. (strain RS-1) protein is Chaperonin GroEL 2.